The sequence spans 743 residues: Polyribonucleotide nucleotidyltransferase (743 aa).

Mg(2+) contacts are provided by aspartate 494 and aspartate 500. The KH domain maps to 561–620 (PQHAEVFVNPDIIRLIIGPGGKNIKAITAATGASVDIEDSGRVSIFAPTAEALEKAREMV). The 75-residue stretch at 630–704 (GKNYNAKVRK…SRKAVLLEEQ (75 aa)) folds into the S1 motif domain. Residues 702-743 (EEQGHPWNPEDTARPQRSDRGDRGDRRGDRGGRDRRDRGDRR) form a disordered region. The span at 712 to 743 (DTARPQRSDRGDRGDRRGDRGGRDRRDRGDRR) shows a compositional bias: basic and acidic residues.

It belongs to the polyribonucleotide nucleotidyltransferase family. Mg(2+) is required as a cofactor.

Its subcellular location is the cytoplasm. It catalyses the reaction RNA(n+1) + phosphate = RNA(n) + a ribonucleoside 5'-diphosphate. Its function is as follows. Involved in mRNA degradation. Catalyzes the phosphorolysis of single-stranded polyribonucleotides processively in the 3'- to 5'-direction. The protein is Polyribonucleotide nucleotidyltransferase of Desulfovibrio desulfuricans (strain ATCC 27774 / DSM 6949 / MB).